The primary structure comprises 622 residues: Neuronal acetylcholine receptor subunit alpha-4 (622 aa).

A signal peptide spans 1–23 (MGFLVSKGNLLLLLCASIFPAFG). Residues 24–237 (HVETRAHAEE…ITYSFIIRRL (214 aa)) are Extracellular-facing. N-linked (GlcNAc...) asparagine glycosylation occurs at Asn52. Val71 and Glu73 together coordinate Ca(2+). Asn102 carries N-linked (GlcNAc...) asparagine glycosylation. Disulfide bonds link Cys156/Cys170 and Cys220/Cys221. Residues 238–262 (PLFYTINLIIPCLLISCLTVLVFYL) form a helical membrane-spanning segment. Cys266 carries S-palmitoyl cysteine lipidation. Helical transmembrane passes span 270-288 (ITLC…LLIT) and 304-325 (YLLF…VLNV). Over 326-595 (HHRSPRTHTM…WKYVAMVIDR (270 aa)) the chain is Cytoplasmic. Disordered regions lie at residues 380-477 (WSET…TEEG) and 497-516 (QTNG…LNEE). Low complexity predominate over residues 390–407 (TTSSSPSPQSNEPSPTSS). Composition is skewed to polar residues over residues 450–472 (SDTQ…YSPN) and 497–508 (QTNGHSSASPAS). Residues 596 to 614 (IFLWMFIIVCLLGTVGLFL) form a helical membrane-spanning segment.

This sequence belongs to the ligand-gated ion channel (TC 1.A.9) family. Acetylcholine receptor (TC 1.A.9.1) subfamily. Alpha-4/CHRNA4 sub-subfamily. As to quaternary structure, neuronal AChR is composed of two different types of subunits: alpha and beta. CHRNA4 forms heteropentameric neuronal acetylcholine receptors with CHRNB2 and CHRNB4, as well as CHRNA5 and CHRNB3 as accesory subunits. Found in two major stoichiometric forms, LS (low agonist sensitivity): (CHRNA4)3:(CHRNB2)2 and HS (high agonist sensitivity): (CHRNA4)2:(CHRNB2)3, the two stoichiometric forms differ in their unitary conductance, calcium permeability, ACh sensitivity and potentiation by divalent cation. Cells produce predominantly an (CHRNA4)3:(CHRNB2)2 nAChR. The (CHRNA4)2:(CHRNB2)3 expression is selectively up-regulated by nicotine and has lower single channel conductance and calcium permeability. In the striatum, also forms CHRNA4:CHRNA6:CHRNB2 complexes. Also found in the stoichiometric form: (CHRNA4:CHRNB2)2:CHRNB3.

It localises to the synaptic cell membrane. The protein resides in the cell membrane. The catalysed reaction is Ca(2+)(in) = Ca(2+)(out). It carries out the reaction K(+)(in) = K(+)(out). It catalyses the reaction Na(+)(in) = Na(+)(out). With respect to regulation, activated by a myriad of ligands such as acetylcholine, cytisine, nicotine, choline and epibatidine. Channel potentiation by calcium is stoichiometry-selective, CHRNA4:CHRNB2 nACh receptor is achieved by calcium association with topographically distinct sites framed by anionic residues within the CHRNA4 subunit and between the CHRNA4 and CHRNB2 subunits. nAChR activity is inhibited by the antagonist alpha-conotoxins BuIA, PnIA, GID and MII, small disulfide-constrained peptides from cone snails. Functionally, component of neuronal acetylcholine receptors (nAChRs) that function as pentameric, ligand-gated cation channels with high calcium permeability among other activities. nAChRs are excitatory neurotrasnmitter receptors formed by a collection of nAChR subunits known to mediate synaptic transmission in the nervous system and the neuromuscular junction. Each nAchR subunit confers differential attributes to channel properties, including activation, deactivation and desensitization kinetics, pH sensitivity, cation permeability, and binding to allosteric modulators. CHRNA4 forms heteropentameric neuronal acetylcholine receptors with CHRNB2 and CHRNB4, as well as CHRNA5 and CHRNB3 as accesory subunits. Is the most abundant nAChR subtype expressed in the central nervous system. Found in two major stoichiometric forms,(CHRNA4)3:(CHRNB2)2 and (CHRNA4)2:(CHRNB2)3, the two stoichiometric forms differ in their unitary conductance, calcium permeability, ACh sensitivity and potentiation by divalent cation. Involved in the modulation of calcium-dependent signaling pathways, influences the release of neurotransmitters, including dopamine, glutamate and GABA. The polypeptide is Neuronal acetylcholine receptor subunit alpha-4 (CHRNA4) (Gallus gallus (Chicken)).